The following is a 336-amino-acid chain: G patch domain and ankyrin repeat-containing protein 1 homolog (336 aa).

ANK repeat units follow at residues 123-152 (FGWTALMMAACEGATEAVSWLVQRGVQVET) and 156-185 (SGNTALKLAQRKGHLDVVHLLESLPILEET). Residues 240-286 (AKNRGLQLMVKQGWDQEHGLGPSQSGRLYPVKTVLRKQRTGLGIEQQ) form the G-patch domain.

The polypeptide is G patch domain and ankyrin repeat-containing protein 1 homolog (Drosophila melanogaster (Fruit fly)).